Reading from the N-terminus, the 237-residue chain is Proteasome subunit alpha type-5-B (237 aa).

Met1 carries the N-acetylmethionine modification. Residues Lys43, Lys66, and Lys185 each participate in a glycyl lysine isopeptide (Lys-Gly) (interchain with G-Cter in ubiquitin) cross-link.

This sequence belongs to the peptidase T1A family. Component of the 20S core complex of the 26S proteasome. The 26S proteasome is composed of a core protease (CP), known as the 20S proteasome, capped at one or both ends by the 19S regulatory particle (RP/PA700). The 20S proteasome core is composed of 28 subunits that are arranged in four stacked rings, resulting in a barrel-shaped structure. The two end rings are each formed by seven alpha subunits, and the two central rings are each formed by seven beta subunits. The catalytic chamber with the active sites is on the inside of the barrel.

Its subcellular location is the cytoplasm. The protein resides in the nucleus. The proteasome is a multicatalytic proteinase complex which is characterized by its ability to cleave peptides with Arg, Phe, Tyr, Leu, and Glu adjacent to the leaving group at neutral or slightly basic pH. The proteasome has an ATP-dependent proteolytic activity. The polypeptide is Proteasome subunit alpha type-5-B (PAE2) (Arabidopsis thaliana (Mouse-ear cress)).